The following is a 1275-amino-acid chain: Inner capsid protein lambda-1 (1275 aa).

A compositionally biased stretch (basic residues) spans 1–12 (MKRIPRKTKGKS). The segment at 1-149 (MKRIPRKTKG…DNEGGSNQKP (149 aa)) is disordered. Composition is skewed to basic and acidic residues over residues 18 to 35 (DSTE…DKQN) and 75 to 117 (NNDE…DKSK). Positions 118-149 (AQVTYSDTGINNANELSRSGNVDNEGGSNQKP) are enriched in polar residues. The C2H2-type zinc finger occupies 181 to 203 (YQCHVCSAVLFSPLDLDAHVASH).

It belongs to the turreted BTV-fold inner capsid family. In terms of assembly, homodecamer; each decamer is made up of two conformers of VP2, called VP2A and VP2B. 12 homodecamers assemble to form an icosahedral capsid. Interacts with protein mu-NS; in viral inclusions. Mg(2+) is required as a cofactor. The cofactor is Mn(2+).

It localises to the virion. The catalysed reaction is ATP + H2O = ADP + phosphate + H(+). Functionally, inner capsid protein that self-assembles to form an icosahedral capsid with a T=2 symmetry, which consists of 120 copies of VP2, with channels at each of its five-fold vertices. This capsid constitutes the innermost concentric layer of the viral mature particle. Its function is as follows. Displays NTPase, RNA 5'-triphosphatase (RTPase) and RNA helicase activities and probably participates in transcription of the viral genome. Helicase activity might be involved in unwinding or reannealing dsRNA during RNA synthesis. RTPase enzymatic activity represents the first step in RNA capping, which yields a 5'-diphosphorylated plus-strand RNA. This chain is Inner capsid protein lambda-1 (L3), found in Reovirus type 1 (strain Lang) (T1L).